Here is a 417-residue protein sequence, read N- to C-terminus: 26S proteasome regulatory subunit RPN14 (417 aa).

6 WD repeats span residues 134-173 (AHVS…NPRT), 176-215 (GHRA…TIHT), 242-281 (ISTS…QTIQ), 285-325 (KFTC…CPVG), 330-371 (NEGT…PAIE), and 380-416 (SNDD…NLSN).

The protein belongs to the WD repeat PAAF1/RPN14 family. As to quaternary structure, associates with the 19S proteasome regulatory particle (RP). Interacts directly with RPT5 and RPT6.

The protein localises to the cytoplasm. Its subcellular location is the nucleus. In terms of biological role, acts as a regulatory subunit of the 26 proteasome which is involved in the ATP-dependent degradation of ubiquitinated proteins. Is not a genuine component of the 26S proteasome, but an auxiliary factor that interacts with the proteasomal ATPase of 19S regulatory particle (RP). Acts as a chaperone which regulates the highly structured assembly of the 19S regulatory particle. Involved in the substrate specificity of the 26S proteasome and is especially involved in the degradation of ubiquitinated GCN4. May contribute to the stability of the 26S proteasome in some stress conditions. The protein is 26S proteasome regulatory subunit RPN14 (RPN14) of Saccharomyces cerevisiae (strain ATCC 204508 / S288c) (Baker's yeast).